The following is a 201-amino-acid chain: FMN-dependent NADH:quinone oxidoreductase (201 aa).

FMN-binding positions include Ser10, 16-18 (SQS), 96-99 (MYNF), and 140-143 (SRGG).

It belongs to the azoreductase type 1 family. Homodimer. FMN serves as cofactor.

The enzyme catalyses 2 a quinone + NADH + H(+) = 2 a 1,4-benzosemiquinone + NAD(+). It catalyses the reaction N,N-dimethyl-1,4-phenylenediamine + anthranilate + 2 NAD(+) = 2-(4-dimethylaminophenyl)diazenylbenzoate + 2 NADH + 2 H(+). In terms of biological role, quinone reductase that provides resistance to thiol-specific stress caused by electrophilic quinones. Its function is as follows. Also exhibits azoreductase activity. Catalyzes the reductive cleavage of the azo bond in aromatic azo compounds to the corresponding amines. The polypeptide is FMN-dependent NADH:quinone oxidoreductase (Pectobacterium atrosepticum (strain SCRI 1043 / ATCC BAA-672) (Erwinia carotovora subsp. atroseptica)).